A 186-amino-acid polypeptide reads, in one-letter code: Methylamine utilization protein MauE (186 aa).

5 helical membrane-spanning segments follow: residues 4–24 (FLIQPMVLWALRIFLALLFVA), 53–73 (VVALVLPVVEAAVAVGLVVTP), 75–95 (AVPAAVAAAALLLVFAAALAI), 127–147 (VLTALALAIATGLPAAVPASL), and 153–173 (GLLAGATAMLIYLSASLLGGL).

It localises to the cell membrane. It functions in the pathway one-carbon metabolism; methylamine degradation. May be specifically involved in the processing, transport, and/or maturation of the MADH beta-subunit. The protein is Methylamine utilization protein MauE (mauE) of Paracoccus denitrificans.